Here is a 141-residue protein sequence, read N- to C-terminus: uncharacterized protein (141 aa).

This is an uncharacterized protein from Schizosaccharomyces pombe (strain 972 / ATCC 24843) (Fission yeast).